The following is a 543-amino-acid chain: CTP synthase (543 aa).

The segment at 1-267 (MKQTKYIFVT…LNPIAEILDL (267 aa)) is amidoligase domain. Position 15 (Ser15) interacts with CTP. Position 15 (Ser15) interacts with UTP. Residues 16–21 (SLGKGI) and Asp73 contribute to the ATP site. Asp73 and Glu141 together coordinate Mg(2+). CTP-binding positions include 148 to 150 (DIE), 188 to 193 (KTKPTQ), and Lys224. UTP is bound by residues 188–193 (KTKPTQ) and Lys224. A Glutamine amidotransferase type-1 domain is found at 292 to 543 (KIAFVGKYVD…IKAAINYEDN (252 aa)). Position 354 (Gly354) interacts with L-glutamine. The Nucleophile; for glutamine hydrolysis role is filled by Cys381. Residues 382–385 (LGMQ), Glu405, and Arg473 each bind L-glutamine. Active-site residues include His516 and Glu518.

This sequence belongs to the CTP synthase family. In terms of assembly, homotetramer.

The enzyme catalyses UTP + L-glutamine + ATP + H2O = CTP + L-glutamate + ADP + phosphate + 2 H(+). It carries out the reaction L-glutamine + H2O = L-glutamate + NH4(+). The catalysed reaction is UTP + NH4(+) + ATP = CTP + ADP + phosphate + 2 H(+). Its pathway is pyrimidine metabolism; CTP biosynthesis via de novo pathway; CTP from UDP: step 2/2. Allosterically activated by GTP, when glutamine is the substrate; GTP has no effect on the reaction when ammonia is the substrate. The allosteric effector GTP functions by stabilizing the protein conformation that binds the tetrahedral intermediate(s) formed during glutamine hydrolysis. Inhibited by the product CTP, via allosteric rather than competitive inhibition. Functionally, catalyzes the ATP-dependent amination of UTP to CTP with either L-glutamine or ammonia as the source of nitrogen. Regulates intracellular CTP levels through interactions with the four ribonucleotide triphosphates. This is CTP synthase from Campylobacter jejuni subsp. doylei (strain ATCC BAA-1458 / RM4099 / 269.97).